The sequence spans 1774 residues: 6-methylsalicylic acid synthase (1774 aa).

Residues 1–14 (MHSAATSTYPSGKT) are compositionally biased toward polar residues. Residues 1–21 (MHSAATSTYPSGKTSPAPVGT) form a disordered region. The region spanning 32–457 (SNDVAVVGMA…GTVSHAVIEE (426 aa)) is the Ketosynthase family 3 (KS3) domain. The tract at residues 186 to 238 (RISYHLNLMGPSTAVDAACASSLVAIHHGVQAIRLGESKVAIVGGVNALCGPG) is acyltransferase. Catalysis depends on for beta-ketoacyl synthase activity residues Cys-204, His-339, and His-379. The segment at 642-676 (NGITPQAVIGHSVGEIAASVVAGALSPAEGALIVT) is acetyl/malonyl transferases. The active-site For malonyltransferase activity is the Ser-653. The interval 926 to 1045 (HTLLGQRIPV…AYWDRKVAGS (120 aa)) is N-terminal hotdog fold. The 277-residue stretch at 926–1202 (HTLLGQRIPV…FSEIEGTPGV (277 aa)) folds into the PKS/mFAS DH domain. The active-site Proton acceptor; for dehydratase activity is His-958. Positions 1059–1202 (VTKLADNFSI…FSEIEGTPGV (144 aa)) are C-terminal hotdog fold. Residue Asp-1123 is the Proton donor; for dehydratase activity of the active site. A 2-oxoacyl reductase region spans residues 1403-1450 (GPRLLPRPEGTYLITGGLGVLGLEVADFLVEKGARRLLLISRRALPPR). Position 1419 to 1424 (1419 to 1424 (GLGVLG)) interacts with NADP(+). Residues 1698–1772 (AYLDEKIRGC…HLAVWFAEKL (75 aa)) enclose the Carrier domain. Residue Ser-1732 is modified to O-(pantetheine 4'-phosphoryl)serine.

As to quaternary structure, homomultimer.

It carries out the reaction 3 malonyl-CoA + acetyl-CoA + NADPH + 3 H(+) = 6-methylsalicylate + 3 CO2 + NADP(+) + 4 CoA + H2O. The protein operates within mycotoxin biosynthesis; patulin biosynthesis. This multifunctional enzyme is a polyketide synthase. It catalyzes a total of 11 steps by seven different component enzymes, in the biosynthesis of the antibiotic patulin. The protein is 6-methylsalicylic acid synthase of Penicillium patulum (Penicillium griseofulvum).